We begin with the raw amino-acid sequence, 93 residues long: Putative regulatory protein Amet_2791 (93 aa).

It belongs to the RemA family.

In Alkaliphilus metalliredigens (strain QYMF), this protein is Putative regulatory protein Amet_2791.